The primary structure comprises 131 residues: Leptin receptor overlapping transcript-like 1 (131 aa).

Helical transmembrane passes span leucine 7–leucine 27, glutamine 32–alanine 52, leucine 69–alanine 89, and alanine 100–phenylalanine 120.

The protein belongs to the OB-RGRP/VPS55 family. Interacts with RAB13.

The protein localises to the membrane. Functionally, negatively regulates growth hormone (GH) receptor cell surface expression in liver. May play a role in liver resistance to GH during periods of reduced nutrient availability. The chain is Leptin receptor overlapping transcript-like 1 (Leprotl1) from Mus musculus (Mouse).